Here is an 857-residue protein sequence, read N- to C-terminus: Autoinducer 2 sensor kinase/phosphatase LuxQ (857 aa).

2 consecutive transmembrane segments (helical) span residues 20–40 (IIFL…YYFS) and 283–303 (LGLA…RSWI). Residues 490 to 712 (KMSHEIRTPL…TFYLSIPVEK (223 aa)) enclose the Histidine kinase domain. The residue at position 493 (His-493) is a Phosphohistidine; by autocatalysis. The Response regulatory domain occupies 735 to 850 (KVLLVEDNHT…ELHDELLHFK (116 aa)). 4-aspartylphosphate is present on Asp-784.

Binds the complex formed by the autoinducer and LuxP.

It is found in the cell inner membrane. The enzyme catalyses ATP + protein L-histidine = ADP + protein N-phospho-L-histidine.. In terms of biological role, at low cell density, in absence of autoinducer has a kinase activity, and autophosphorylates on a histidine residue. The phosphoryl group is then transferred to an aspartate residue in the response regulator domain. The phosphoryl group is transferred to LuxU, and ultimately to LuxO. At high cell density, in the presence of autoinducer, the kinase activity is inactivated, and the response regulator domain has a phosphatase activity. This is Autoinducer 2 sensor kinase/phosphatase LuxQ (luxQ) from Vibrio vulnificus (strain CMCP6).